Consider the following 122-residue polypeptide: Large ribosomal subunit protein bL12 (122 aa).

Belongs to the bacterial ribosomal protein bL12 family. In terms of assembly, homodimer. Part of the ribosomal stalk of the 50S ribosomal subunit. Forms a multimeric L10(L12)X complex, where L10 forms an elongated spine to which 2 to 4 L12 dimers bind in a sequential fashion. Binds GTP-bound translation factors.

Functionally, forms part of the ribosomal stalk which helps the ribosome interact with GTP-bound translation factors. Is thus essential for accurate translation. The protein is Large ribosomal subunit protein bL12 of Neisseria lactamica.